The primary structure comprises 396 residues: Ubiquitin-like modifier-activating enzyme 5 (396 aa).

ATP-binding residues include G76, D97, K120, N143, and N177. 2 residues coordinate Zn(2+): C219 and C222. C243 serves as the catalytic Glycyl thioester intermediate. Zn(2+) is bound by residues C296 and C301.

It belongs to the ubiquitin-activating E1 family. UBA5 subfamily.

Functionally, E1-like enzyme which activates UFM1. This Drosophila ananassae (Fruit fly) protein is Ubiquitin-like modifier-activating enzyme 5.